Here is a 312-residue protein sequence, read N- to C-terminus: Tetraacyldisaccharide 4'-kinase (312 aa).

60-67 (IAGGSGKT) contacts ATP.

Belongs to the LpxK family.

It catalyses the reaction a lipid A disaccharide + ATP = a lipid IVA + ADP + H(+). It functions in the pathway glycolipid biosynthesis; lipid IV(A) biosynthesis; lipid IV(A) from (3R)-3-hydroxytetradecanoyl-[acyl-carrier-protein] and UDP-N-acetyl-alpha-D-glucosamine: step 6/6. Transfers the gamma-phosphate of ATP to the 4'-position of a tetraacyldisaccharide 1-phosphate intermediate (termed DS-1-P) to form tetraacyldisaccharide 1,4'-bis-phosphate (lipid IVA). The protein is Tetraacyldisaccharide 4'-kinase of Helicobacter acinonychis (strain Sheeba).